A 239-amino-acid polypeptide reads, in one-letter code: Pyridoxine 5'-phosphate synthase (239 aa).

Residue Asn7 participates in 3-amino-2-oxopropyl phosphate binding. 9–10 (DH) lines the 1-deoxy-D-xylulose 5-phosphate pocket. Position 18 (Arg18) interacts with 3-amino-2-oxopropyl phosphate. His43 acts as the Proton acceptor in catalysis. Residues Arg45 and His50 each coordinate 1-deoxy-D-xylulose 5-phosphate. Glu70 acts as the Proton acceptor in catalysis. Position 100 (Thr100) interacts with 1-deoxy-D-xylulose 5-phosphate. His191 serves as the catalytic Proton donor. Residues Gly192 and 213–214 (GH) each bind 3-amino-2-oxopropyl phosphate.

This sequence belongs to the PNP synthase family. Homooctamer; tetramer of dimers.

The protein localises to the cytoplasm. The catalysed reaction is 3-amino-2-oxopropyl phosphate + 1-deoxy-D-xylulose 5-phosphate = pyridoxine 5'-phosphate + phosphate + 2 H2O + H(+). It participates in cofactor biosynthesis; pyridoxine 5'-phosphate biosynthesis; pyridoxine 5'-phosphate from D-erythrose 4-phosphate: step 5/5. Functionally, catalyzes the complicated ring closure reaction between the two acyclic compounds 1-deoxy-D-xylulose-5-phosphate (DXP) and 3-amino-2-oxopropyl phosphate (1-amino-acetone-3-phosphate or AAP) to form pyridoxine 5'-phosphate (PNP) and inorganic phosphate. The chain is Pyridoxine 5'-phosphate synthase from Gloeobacter violaceus (strain ATCC 29082 / PCC 7421).